The primary structure comprises 152 residues: MACCSTSFCGFPICSTAGTCGSSCCRSTCSQTSCCQPTSIQTSCCQPTCLQTSGCETGCGIGGSTGYGQVGSSGAVSSRTRWCRPDCRVEGTSLPPCCVVSCTSPSCCQLYYAQASCCRPSYCGQSCCRPACCCQPTCTEPVCEPTCSQPIC.

The residue at position 2 (Ala-2) is an N-acetylalanine. Repeats lie at residues 27–36 (STCSQTSCCQ), 37–46 (PTSIQTSCCQ), and 47–56 (PTCLQTSGCE).

Its function is as follows. The keratin products of mammalian epidermal derivatives such as wool and hair consist of microfibrils embedded in a rigid matrix of other proteins. The matrix proteins include the high-sulfur and high-tyrosine keratins, having molecular weights of 6-20 kDa, whereas the microfibrils contain the larger, low-sulfur keratins (40-56 kDa). The chain is Keratin, high-sulfur matrix protein, B2C from Ovis aries (Sheep).